Consider the following 93-residue polypeptide: RNA-binding protein Hfq (93 aa).

Residues 9 to 68 (DPFLNALRRERVPVSIYLVNGIKLQGQVESFDQFVILLKNTVSQMVYKHAISTVVPARPF) enclose the Sm domain. The interval 70–93 (VNSHTAAPSPAGGFNGQQDDNNDQ) is disordered.

The protein belongs to the Hfq family. Homohexamer.

Its function is as follows. RNA chaperone that binds small regulatory RNA (sRNAs) and mRNAs to facilitate mRNA translational regulation in response to envelope stress, environmental stress and changes in metabolite concentrations. Also binds with high specificity to tRNAs. The protein is RNA-binding protein Hfq of Shewanella sediminis (strain HAW-EB3).